A 234-amino-acid polypeptide reads, in one-letter code: MDIKLKDFEGPLDLLLHLVSQYKVDIYEVPIVEVIEQYLNYIETLQVMKLEVAGDYMLMASQLMLIKSRRLLPKVVEHIEEEDLEQDLLEKIEEYSRFKTVSQALAKQHDQRAKWYSKPKQELIFEDAILQEDKTVMDLFLAFSNIMAAKRAVLKNNHTVIERDDYKIEDMMASIKQRLEKENVISLSAIFEECQTLNEVISIFLASLELIKLHVVFVEQFSNFGAIILRKEKK.

It belongs to the ScpA family. In terms of assembly, component of a cohesin-like complex composed of ScpA, ScpB and the Smc homodimer, in which ScpA and ScpB bind to the head domain of Smc. The presence of the three proteins is required for the association of the complex with DNA.

The protein localises to the cytoplasm. In terms of biological role, participates in chromosomal partition during cell division. May act via the formation of a condensin-like complex containing Smc and ScpB that pull DNA away from mid-cell into both cell halves. This chain is Segregation and condensation protein A, found in Streptococcus pyogenes serotype M18 (strain MGAS8232).